Consider the following 258-residue polypeptide: Aspartate/glutamate leucyltransferase (258 aa).

The protein belongs to the R-transferase family. Bpt subfamily.

Its subcellular location is the cytoplasm. The catalysed reaction is N-terminal L-glutamyl-[protein] + L-leucyl-tRNA(Leu) = N-terminal L-leucyl-L-glutamyl-[protein] + tRNA(Leu) + H(+). It catalyses the reaction N-terminal L-aspartyl-[protein] + L-leucyl-tRNA(Leu) = N-terminal L-leucyl-L-aspartyl-[protein] + tRNA(Leu) + H(+). Functions in the N-end rule pathway of protein degradation where it conjugates Leu from its aminoacyl-tRNA to the N-termini of proteins containing an N-terminal aspartate or glutamate. This chain is Aspartate/glutamate leucyltransferase, found in Rhodopseudomonas palustris (strain BisA53).